A 209-amino-acid chain; its full sequence is Probable GTP-binding protein EngB (209 aa).

Residues 22–198 form the EngB-type G domain; sequence TPLEIAFVGR…NRTVGSWFDA (177 aa). Positions 37 and 59 each coordinate Mg(2+).

It belongs to the TRAFAC class TrmE-Era-EngA-EngB-Septin-like GTPase superfamily. EngB GTPase family. Mg(2+) is required as a cofactor.

Its function is as follows. Necessary for normal cell division and for the maintenance of normal septation. The chain is Probable GTP-binding protein EngB from Neisseria meningitidis serogroup C (strain 053442).